The sequence spans 150 residues: Large ribosomal subunit protein bL9 (150 aa).

This sequence belongs to the bacterial ribosomal protein bL9 family.

In terms of biological role, binds to the 23S rRNA. The chain is Large ribosomal subunit protein bL9 from Streptococcus pyogenes serotype M2 (strain MGAS10270).